Consider the following 928-residue polypeptide: MNETMATDSPRRPSRCTGGVVVRPQAVTEQSYMESVVTFLQDVVPQAYSGSPLTEEKEKIVWVRFENADLNDTSRNLEFHELHSTGNEPPLLVMIGYSDGMQVWGIPISGEAQELFSVRHGPVRAARILPAPQLGAQKCDNFAEKRPLLGVCKSIGSSGTTPPYCCVDLYSLRTGEMVKSIQFKTPIYDLHCNKRILVVVLQEKIAAFDSCTFTKKFFVTSCYPCPGPNMNPIALGSRWLAYAENKLIRCHQSRGGACGDNIQSYTATVLSAAKTLKSGLTMVGKVVTQLTGTLPSGVTEDDVALHCNSRRSPLVPGIITVIDTETVGEGQVLVSEDSDSDGIVAHFPAHEKPVCCMAFNTSGMLLVTTDTLGHDFHVFQILTHPWSSSQCAVHHLYTLHRGETEAKVQDICFSHDCRWVVVSTLRGTSHVFPINPYGGQPCVRTHMSPRVVNRMSRFQKSAGLEEIEQELTSKQGGRCSPVPGLSSSPSGSPLHGKLTSQDSYNNFTNNNPGNPRLSPLPSLMVVTPLAQIKQPMTLGTITKRTGPYLFGAGCFSIKAPCKVKSPPQISPSKSMGGEFCVAAVFGTSRSWFANNAGLKREKDQSKQVVVESLYIISCYGTLVEHMIEPRPISTAPKISDDTPLEIMTSPRASWTLVRTPQWNELQPPFNANHPLLLAAEAVQYYQLLLAGSLPPGSPGPITRHGSYDSLASDHSGQEDEEWLSQVEIVTHTGPHRRLWMGPQFHFKTIQTSGQTTVISTSSSVLQSHGPSDTPQPLLDFDTDDLDLNSLRIQPVRSDPVSMPGSSRAVSDRRGVSTVTDAASGTFDRSVTLLEVCGSWPEGFGLRHMSSMEHSEEGLRERLADAMAESPSRDVVGSGTELQREGSIETLSNSSGSTSGSIPRNFDGYRSPLPTNESQPLSLFPTGFP.

Met-1 is subject to N-acetylmethionine. Lys-215 is covalently cross-linked (Glycyl lysine isopeptide (Lys-Gly) (interchain with G-Cter in SUMO1); alternate). A Glycyl lysine isopeptide (Lys-Gly) (interchain with G-Cter in SUMO2); alternate cross-link involves residue Lys-215. Required for recruitment to preautophagosomal structure in response to mitophagy regions lie at residues 254 to 312 and 437 to 560; these read RGGA…SRRS and YGGQ…IKAP. Phosphoserine is present on residues Ser-461, Ser-480, and Ser-488. Disordered stretches follow at residues 472–518 and 795–816; these read TSKQ…PRLS and VRSD…RGVS. Composition is skewed to low complexity over residues 480 to 494 and 505 to 514; these read SPVP…GSPL and NNFTNNNPGN. Phosphoserine occurs at positions 838, 886, and 898. Positions 868 to 928 are disordered; that stretch reads ESPSRDVVGS…PLSLFPTGFP (61 aa). Over residues 887–901 the composition is skewed to low complexity; sequence IETLSNSSGSTSGSI.

The protein belongs to the BCAS3 family. As to quaternary structure, interacts with histone H3, ESR1, KAT2B and PELP1; the interactions occur in a estrogen-dependent manner. Interacts with beta-tubulin and VIM. Interacts (via C-terminal) with PHAF1; the interaction is requrired for the association with the phagophore. Expressed in blood islands and yolk sac blood islands (at protein level). Highly expressed in mammary tumors. Expressed in eostrogen-induced epithelial cells of mammary glands. Expressed in brain, heart, kidney, lung, liver and spleen. Expressed in embryonic stem cells, embryoid bodies, endothelial cells and fibroblasts.

It is found in the nucleus. The protein resides in the cytoplasm. It localises to the cytoskeleton. The protein localises to the preautophagosomal structure. Its function is as follows. Functions synergistically with PELP1 as a transcriptional coactivator of estrogen receptor-responsive genes. Stimulates histone acetyltransferase activity. Binds to chromatin. Plays a role in angiogenesis. Participates in the regulation of cell polarity and directional endothelial cell migration by mediating both the activation and recruitment of CDC42 and the reorganization of the actin cytoskeleton at the cell leading edge. Promotes filipodia formation. Plays a regulatory role in autophagic activity. In complex with PHAF1, associates with the preautophagosomal structure during both non-selective and selective autophagy. Probably binds phosphatidylinositol 3-phosphate (PtdIns3P) which would mediate the recruitment preautophagosomal structures. This is BCAS3 microtubule associated cell migration factor from Mus musculus (Mouse).